The primary structure comprises 105 residues: UPF0145 protein jk0060 (105 aa).

This sequence belongs to the UPF0145 family.

In Corynebacterium jeikeium (strain K411), this protein is UPF0145 protein jk0060.